The following is a 565-amino-acid chain: NAD-dependent malic enzyme (565 aa).

Tyrosine 104 functions as the Proton donor in the catalytic mechanism. Arginine 157 is a binding site for NAD(+). Residue lysine 175 is the Proton acceptor of the active site. Residues glutamate 246, aspartate 247, and aspartate 270 each contribute to the a divalent metal cation site. Residues aspartate 270 and asparagine 418 each contribute to the NAD(+) site.

The protein belongs to the malic enzymes family. Homotetramer. Mg(2+) serves as cofactor. It depends on Mn(2+) as a cofactor.

It catalyses the reaction (S)-malate + NAD(+) = pyruvate + CO2 + NADH. The enzyme catalyses oxaloacetate + H(+) = pyruvate + CO2. This is NAD-dependent malic enzyme from Escherichia coli O6:H1 (strain CFT073 / ATCC 700928 / UPEC).